The primary structure comprises 140 residues: Large-conductance mechanosensitive channel (140 aa).

Transmembrane regions (helical) follow at residues 16 to 36 (VVDLAVGVIIGAAFGKIVDSI) and 86 to 106 (GSFLTIVLNFLILAFIIFLMV).

The protein belongs to the MscL family. Homopentamer.

It is found in the cell inner membrane. Functionally, channel that opens in response to stretch forces in the membrane lipid bilayer. May participate in the regulation of osmotic pressure changes within the cell. The chain is Large-conductance mechanosensitive channel from Anaeromyxobacter sp. (strain K).